The chain runs to 94 residues: Exodeoxyribonuclease 7 small subunit (94 aa).

Belongs to the XseB family. In terms of assembly, heterooligomer composed of large and small subunits.

Its subcellular location is the cytoplasm. The catalysed reaction is Exonucleolytic cleavage in either 5'- to 3'- or 3'- to 5'-direction to yield nucleoside 5'-phosphates.. Its function is as follows. Bidirectionally degrades single-stranded DNA into large acid-insoluble oligonucleotides, which are then degraded further into small acid-soluble oligonucleotides. In Ralstonia nicotianae (strain ATCC BAA-1114 / GMI1000) (Ralstonia solanacearum), this protein is Exodeoxyribonuclease 7 small subunit.